The chain runs to 196 residues: Orotate phosphoribosyltransferase (196 aa).

117 to 125 (EDIVTTGLS) provides a ligand contact to 5-phospho-alpha-D-ribose 1-diphosphate. Residues Thr-121 and Arg-149 each coordinate orotate.

Belongs to the purine/pyrimidine phosphoribosyltransferase family. PyrE subfamily. As to quaternary structure, homodimer. It depends on Mg(2+) as a cofactor.

It carries out the reaction orotidine 5'-phosphate + diphosphate = orotate + 5-phospho-alpha-D-ribose 1-diphosphate. It participates in pyrimidine metabolism; UMP biosynthesis via de novo pathway; UMP from orotate: step 1/2. Functionally, catalyzes the transfer of a ribosyl phosphate group from 5-phosphoribose 1-diphosphate to orotate, leading to the formation of orotidine monophosphate (OMP). The protein is Orotate phosphoribosyltransferase of Methylorubrum extorquens (strain PA1) (Methylobacterium extorquens).